The following is a 509-amino-acid chain: ATP synthase subunit alpha, mitochondrial (509 aa).

171 to 178 is an ATP binding site; the sequence is GDRQTGKT.

It belongs to the ATPase alpha/beta chains family. As to quaternary structure, F-type ATPases have 2 components, CF(1) - the catalytic core - and CF(0) - the membrane proton channel. CF(1) has five subunits: alpha(3), beta(3), gamma(1), delta(1), epsilon(1). CF(0) has three main subunits: a, b and c.

The protein resides in the mitochondrion. The protein localises to the mitochondrion inner membrane. Mitochondrial membrane ATP synthase (F(1)F(0) ATP synthase or Complex V) produces ATP from ADP in the presence of a proton gradient across the membrane which is generated by electron transport complexes of the respiratory chain. F-type ATPases consist of two structural domains, F(1) - containing the extramembraneous catalytic core, and F(0) - containing the membrane proton channel, linked together by a central stalk and a peripheral stalk. During catalysis, ATP synthesis in the catalytic domain of F(1) is coupled via a rotary mechanism of the central stalk subunits to proton translocation. Subunits alpha and beta form the catalytic core in F(1). Rotation of the central stalk against the surrounding alpha(3)beta(3) subunits leads to hydrolysis of ATP in three separate catalytic sites on the beta subunits. Subunit alpha does not bear the catalytic high-affinity ATP-binding sites. The protein is ATP synthase subunit alpha, mitochondrial (ATPA) of Triticum aestivum (Wheat).